A 236-amino-acid chain; its full sequence is Proteasome subunit alpha (236 aa).

It belongs to the peptidase T1A family. In terms of assembly, the 20S proteasome core is composed of 14 alpha and 14 beta subunits that assemble into four stacked heptameric rings, resulting in a barrel-shaped structure. The two inner rings, each composed of seven catalytic beta subunits, are sandwiched by two outer rings, each composed of seven alpha subunits. The catalytic chamber with the active sites is on the inside of the barrel. Has a gated structure, the ends of the cylinder being occluded by the N-termini of the alpha-subunits. Is capped by the proteasome-associated ATPase, ARC.

The protein resides in the cytoplasm. The protein operates within protein degradation; proteasomal Pup-dependent pathway. The formation of the proteasomal ATPase ARC-20S proteasome complex, likely via the docking of the C-termini of ARC into the intersubunit pockets in the alpha-rings, may trigger opening of the gate for substrate entry. Interconversion between the open-gate and close-gate conformations leads to a dynamic regulation of the 20S proteasome proteolysis activity. Functionally, component of the proteasome core, a large protease complex with broad specificity involved in protein degradation. The polypeptide is Proteasome subunit alpha (Jonesia denitrificans (strain ATCC 14870 / DSM 20603 / BCRC 15368 / CIP 55.134 / JCM 11481 / NBRC 15587 / NCTC 10816 / Prevot 55134) (Listeria denitrificans)).